We begin with the raw amino-acid sequence, 224 residues long: UPF0758 protein PST_0473 (224 aa).

One can recognise an MPN domain in the interval alanine 102–methionine 224. Zn(2+) is bound by residues histidine 173, histidine 175, and aspartate 186. The JAMM motif signature appears at histidine 173–aspartate 186.

The protein belongs to the UPF0758 family.

The chain is UPF0758 protein PST_0473 from Stutzerimonas stutzeri (strain A1501) (Pseudomonas stutzeri).